The chain runs to 316 residues: Putative ring-cleaving dioxygenase MhqA (316 aa).

VOC domains lie at 5-131 (GIHH…LTAD) and 154-278 (GLGP…LSTD). Residues histidine 8, histidine 226, and glutamate 274 each contribute to the Fe cation site.

It belongs to the extradiol ring-cleavage dioxygenase family. Requires Fe(2+) as cofactor.

It localises to the cytoplasm. Putative ring-cleavage dioxygenase that may contribute to the degradation of aromatic compounds. The sequence is that of Putative ring-cleaving dioxygenase MhqA (mhqA) from Bacillus subtilis (strain 168).